The following is a 426-amino-acid chain: Glutamate-1-semialdehyde 2,1-aminomutase (426 aa).

Lys-265 carries the N6-(pyridoxal phosphate)lysine modification.

Belongs to the class-III pyridoxal-phosphate-dependent aminotransferase family. HemL subfamily. As to quaternary structure, homodimer. It depends on pyridoxal 5'-phosphate as a cofactor.

The protein resides in the cytoplasm. The catalysed reaction is (S)-4-amino-5-oxopentanoate = 5-aminolevulinate. It participates in porphyrin-containing compound metabolism; protoporphyrin-IX biosynthesis; 5-aminolevulinate from L-glutamyl-tRNA(Glu): step 2/2. The sequence is that of Glutamate-1-semialdehyde 2,1-aminomutase from Salmonella typhi.